The primary structure comprises 312 residues: Ribosomal RNA small subunit methyltransferase H (312 aa).

Residues 30–32 (GGH), Asp50, Phe80, Asp98, and Gln105 each bind S-adenosyl-L-methionine.

The protein belongs to the methyltransferase superfamily. RsmH family.

It localises to the cytoplasm. The enzyme catalyses cytidine(1402) in 16S rRNA + S-adenosyl-L-methionine = N(4)-methylcytidine(1402) in 16S rRNA + S-adenosyl-L-homocysteine + H(+). Functionally, specifically methylates the N4 position of cytidine in position 1402 (C1402) of 16S rRNA. In Lawsonia intracellularis (strain PHE/MN1-00), this protein is Ribosomal RNA small subunit methyltransferase H.